The primary structure comprises 1962 residues: PIII-type proteinase (1962 aa).

Positions 1–33 are cleaved as a signal peptide; that stretch reads MQRKKKGLSILLAGTVALGALAVLPVGEIQAKA. The propeptide occupies 34–187; sequence AISQQTKGSS…VTLAKVYYPT (154 aa). In terms of domain architecture, Peptidase S8 spans 191–697; that stretch reads ANSMANVQAV…AGLVDVKAAI (507 aa). Residues D217, H281, and S620 each act as charge relay system in the active site. The tract at residues 1796-1938 is disordered; the sequence is GKGDGTTGTS…KTGETTERPA (143 aa). Over residues 1797 to 1812 the composition is skewed to gly residues; the sequence is KGDGTTGTSDKGGGQG. Composition is skewed to polar residues over residues 1856–1865 and 1890–1903; these read RNGQLTSGTS and SQPSSGGNIPTNPA. The LPXTG sorting signal signature appears at 1927 to 1931; it reads LPKTG. T1930 carries the pentaglycyl murein peptidoglycan amidated threonine modification. A propeptide spans 1931-1962 (removed by sortase); it reads GETTERPAFGFLGVIVVSLMGVLGLKRKQREE.

Belongs to the peptidase S8 family.

Its subcellular location is the secreted. It is found in the cell wall. The enzyme catalyses Endopeptidase activity with very broad specificity, although some subsite preference have been noted, e.g. large hydrophobic residues in the P1 and P4 positions, and Pro in the P2 position. Best known for its action on caseins, although it has been shown to hydrolyze hemoglobin and oxidized insulin B-chain.. Functionally, protease which breaks down milk proteins during the growth of the bacteria on milk. The polypeptide is PIII-type proteinase (prtP) (Lactococcus lactis subsp. cremoris (strain SK11)).